The primary structure comprises 160 residues: Dihydrofolate reductase (160 aa).

The region spanning 1–160 (MVKAIWAMDQ…KVAYYHKIAR (160 aa)) is the DHFR domain. Residue 5 to 7 (IWA) participates in substrate binding. NADP(+) is bound by residues 6–7 (WA) and 14–19 (IGNGNS). Positions 27 and 32 each coordinate substrate. NADP(+) is bound at residue 43–46 (GSAT). A substrate-binding site is contributed by arginine 57. NADP(+) is bound by residues 62–65 (LTRN) and 101–106 (CGGAQV). Position 120 (serine 120) interacts with substrate.

It belongs to the dihydrofolate reductase family.

It catalyses the reaction (6S)-5,6,7,8-tetrahydrofolate + NADP(+) = 7,8-dihydrofolate + NADPH + H(+). Its pathway is cofactor biosynthesis; tetrahydrofolate biosynthesis; 5,6,7,8-tetrahydrofolate from 7,8-dihydrofolate: step 1/1. Its function is as follows. Key enzyme in folate metabolism. Catalyzes an essential reaction for de novo glycine and purine synthesis, and for DNA precursor synthesis. The chain is Dihydrofolate reductase (folA) from Mycoplasma pneumoniae (strain ATCC 29342 / M129 / Subtype 1) (Mycoplasmoides pneumoniae).